We begin with the raw amino-acid sequence, 93 residues long: DNA-binding protein Fis (93 aa).

Residues glutamine 74–lysine 93 constitute a DNA-binding region (H-T-H motif).

This sequence belongs to the transcriptional regulatory Fis family. Homodimer.

Functionally, activates ribosomal RNA transcription. Plays a direct role in upstream activation of rRNA promoters. This Klebsiella pneumoniae protein is DNA-binding protein Fis.